The chain runs to 515 residues: Zinc-binding protein AdcA (515 aa).

A signal peptide spans 1-28 (MKKKILLMMSLISVFFAWQLTQAKQVLA). Residue histidine 66 coordinates Zn(2+). Residues 125 to 148 (DHHHEDADKKHEHNKHSEEGHNHA) are disordered. The his-rich loop stretch occupies residues 129 to 148 (EDADKKHEHNKHSEEGHNHA). Positions 152, 216, and 291 each coordinate Zn(2+).

It belongs to the bacterial solute-binding protein 9 family.

Functionally, part of the ATP-binding cassette (ABC) transport system AdcABC involved in zinc import. Binds zinc with high affinity and specificity and delivers it to the membrane permease for translocation into the cytoplasm. The chain is Zinc-binding protein AdcA (adcA) from Streptococcus pyogenes serotype M18 (strain MGAS8232).